The chain runs to 367 residues: Heme A synthase (367 aa).

5 consecutive transmembrane segments (helical) span residues 25 to 45 (AIRIWLGCVLLALFALVLVGG), 111 to 131 (FLARAMGVIFGVPLLFFVLTG), 137 to 157 (LWLPLGGIFLLGGLQGAIGWW), 174 to 194 (LATHLVTACLIFASCMWFMRA), and 211 to 231 (LAGLIAFMSLFQIYLGALVAG). Histidine 274 lines the heme pocket. The next 3 helical transmembrane spans lie at 276-296 (LGAYALFAVVAVNMIISLRAA), 305-325 (SVVLFVLVLIQAILGITTLLL), and 327-347 (VPLHLALTHQAGALIVFGFAI). Histidine 335 contributes to the heme binding site.

This sequence belongs to the COX15/CtaA family. Type 2 subfamily. In terms of assembly, interacts with CtaB. Requires heme b as cofactor.

Its subcellular location is the cell membrane. The enzyme catalyses Fe(II)-heme o + 2 A + H2O = Fe(II)-heme a + 2 AH2. The protein operates within porphyrin-containing compound metabolism; heme A biosynthesis; heme A from heme O: step 1/1. Catalyzes the conversion of heme O to heme A by two successive hydroxylations of the methyl group at C8. The first hydroxylation forms heme I, the second hydroxylation results in an unstable dihydroxymethyl group, which spontaneously dehydrates, resulting in the formyl group of heme A. This is Heme A synthase from Rhizobium rhizogenes (strain K84 / ATCC BAA-868) (Agrobacterium radiobacter).